Reading from the N-terminus, the 257-residue chain is UPF0246 protein CLL_A2361 (257 aa).

It belongs to the UPF0246 family.

The protein is UPF0246 protein CLL_A2361 of Clostridium botulinum (strain Eklund 17B / Type B).